The primary structure comprises 311 residues: tRNA dimethylallyltransferase (311 aa).

Residue Gly11–Thr18 coordinates ATP. Position 13-18 (Thr13–Thr18) interacts with substrate. Positions Asp36–Gln39 are interaction with substrate tRNA.

Belongs to the IPP transferase family. As to quaternary structure, monomer. Mg(2+) is required as a cofactor.

The enzyme catalyses adenosine(37) in tRNA + dimethylallyl diphosphate = N(6)-dimethylallyladenosine(37) in tRNA + diphosphate. Functionally, catalyzes the transfer of a dimethylallyl group onto the adenine at position 37 in tRNAs that read codons beginning with uridine, leading to the formation of N6-(dimethylallyl)adenosine (i(6)A). This is tRNA dimethylallyltransferase from Clostridioides difficile (strain 630) (Peptoclostridium difficile).